The following is a 420-amino-acid chain: Gamma-glutamyl phosphate reductase (420 aa).

This sequence belongs to the gamma-glutamyl phosphate reductase family.

It is found in the cytoplasm. It catalyses the reaction L-glutamate 5-semialdehyde + phosphate + NADP(+) = L-glutamyl 5-phosphate + NADPH + H(+). It functions in the pathway amino-acid biosynthesis; L-proline biosynthesis; L-glutamate 5-semialdehyde from L-glutamate: step 2/2. In terms of biological role, catalyzes the NADPH-dependent reduction of L-glutamate 5-phosphate into L-glutamate 5-semialdehyde and phosphate. The product spontaneously undergoes cyclization to form 1-pyrroline-5-carboxylate. This is Gamma-glutamyl phosphate reductase from Cereibacter sphaeroides (strain ATCC 17029 / ATH 2.4.9) (Rhodobacter sphaeroides).